A 390-amino-acid chain; its full sequence is Chorismate synthase (390 aa).

R40 and R46 together coordinate NADP(+). FMN contacts are provided by residues 129 to 131 (RAS), 249 to 250 (QA), G294, 309 to 313 (KPIPT), and R335.

It belongs to the chorismate synthase family. As to quaternary structure, homotetramer. FMNH2 is required as a cofactor.

It catalyses the reaction 5-O-(1-carboxyvinyl)-3-phosphoshikimate = chorismate + phosphate. The protein operates within metabolic intermediate biosynthesis; chorismate biosynthesis; chorismate from D-erythrose 4-phosphate and phosphoenolpyruvate: step 7/7. Its function is as follows. Catalyzes the anti-1,4-elimination of the C-3 phosphate and the C-6 proR hydrogen from 5-enolpyruvylshikimate-3-phosphate (EPSP) to yield chorismate, which is the branch point compound that serves as the starting substrate for the three terminal pathways of aromatic amino acid biosynthesis. This reaction introduces a second double bond into the aromatic ring system. The polypeptide is Chorismate synthase (Desulforudis audaxviator (strain MP104C)).